Here is a 231-residue protein sequence, read N- to C-terminus: Large ribosomal subunit protein uL1 (231 aa).

It belongs to the universal ribosomal protein uL1 family. In terms of assembly, part of the 50S ribosomal subunit.

Binds directly to 23S rRNA. The L1 stalk is quite mobile in the ribosome, and is involved in E site tRNA release. Its function is as follows. Protein L1 is also a translational repressor protein, it controls the translation of the L11 operon by binding to its mRNA. This Azoarcus sp. (strain BH72) protein is Large ribosomal subunit protein uL1.